The following is a 154-amino-acid chain: Myoglobin (154 aa).

One can recognise a Globin domain in the interval 2-148 (GLSDAEWQLV…FRNDIAAKYK (147 aa)). A Phosphoserine modification is found at Ser4. His65 is a binding site for nitrite. An O2-binding site is contributed by His65. The residue at position 68 (Thr68) is a Phosphothreonine. His94 serves as a coordination point for heme b.

The protein belongs to the globin family. As to quaternary structure, monomeric.

Its subcellular location is the cytoplasm. The protein resides in the sarcoplasm. It carries out the reaction Fe(III)-heme b-[protein] + nitric oxide + H2O = Fe(II)-heme b-[protein] + nitrite + 2 H(+). The catalysed reaction is H2O2 + AH2 = A + 2 H2O. Monomeric heme protein which primary function is to store oxygen and facilitate its diffusion within muscle tissues. Reversibly binds oxygen through a pentacoordinated heme iron and enables its timely and efficient release as needed during periods of heightened demand. Depending on the oxidative conditions of tissues and cells, and in addition to its ability to bind oxygen, it also has a nitrite reductase activity whereby it regulates the production of bioactive nitric oxide. Under stress conditions, like hypoxia and anoxia, it also protects cells against reactive oxygen species thanks to its pseudoperoxidase activity. This Orycteropus afer (Aardvark) protein is Myoglobin (MB).